The primary structure comprises 349 residues: Cbb3-type cytochrome c oxidase subunit CcoP (349 aa).

The interval 1-67 is disordered; that stretch reads MADTDDEHAS…RVVRDRKGGR (67 aa). The Cytoplasmic segment spans residues 1–96; the sequence is MADTDDEHAS…NPLPRWWLWT (96 aa). Residues 16 to 30 show a composition bias toward basic and acidic residues; that stretch reads NRIELERQAADEAHK. The chain crosses the membrane as a helical span at residues 97–117; that stretch reads FYATIVWGVLYLIAYPAIPLV. Residues 118 to 349 lie on the Periplasmic side of the membrane; the sequence is NGATQGLLGQ…AYVHSLGGGE (232 aa). Cytochrome c domains follow at residues 168 to 258 and 265 to 346; these read YTAN…LELG and ALAA…HSLG. Residues C181, C184, H185, M233, C278, C281, H282, and M323 each contribute to the heme c site.

Belongs to the CcoP / FixP family. In terms of assembly, component of the cbb3-type cytochrome c oxidase at least composed of CcoN, CcoO, CcoQ and CcoP. Requires heme c as cofactor.

It is found in the cell inner membrane. It participates in energy metabolism; oxidative phosphorylation. Functionally, C-type cytochrome. Part of the cbb3-type cytochrome c oxidase complex. CcoP subunit is required for transferring electrons from donor cytochrome c via its heme groups to CcoO subunit. From there, electrons are shuttled to the catalytic binuclear center of CcoN subunit where oxygen reduction takes place. The complex also functions as a proton pump. This chain is Cbb3-type cytochrome c oxidase subunit CcoP, found in Paracoccus denitrificans (strain Pd 1222).